A 399-amino-acid chain; its full sequence is Phosphomevalonate dehydratase large subunit (399 aa).

(R)-5-phosphomevalonate is bound by residues Gly-54, Val-55, Ser-56, Asn-85, and Pro-86. Residue Cys-125 coordinates [4Fe-4S] cluster. 2 residues coordinate (R)-5-phosphomevalonate: Glu-144 and Ser-145. [4Fe-4S] cluster contacts are provided by Cys-298 and Cys-355. Lys-375 provides a ligand contact to (R)-5-phosphomevalonate.

It belongs to the AcnX type II large subunit family. As to quaternary structure, heterodimer composed of a large subunit (PMDh-L) and a small subunit (PMDh-S). [4Fe-4S] cluster serves as cofactor.

The catalysed reaction is (R)-5-phosphomevalonate = (2E)-3-methyl-5-phosphooxypent-2-enoate + H2O. Its pathway is isoprenoid biosynthesis; isopentenyl diphosphate biosynthesis via mevalonate pathway. Component of a hydro-lyase that catalyzes the dehydration of mevalonate 5-phosphate (MVA5P) to form trans-anhydromevalonate 5-phosphate (tAHMP). Involved in the archaeal mevalonate (MVA) pathway, which provides fundamental precursors for isoprenoid biosynthesis, such as isopentenyl diphosphate (IPP) and dimethylallyl diphosphate (DMAPP). The polypeptide is Phosphomevalonate dehydratase large subunit (Methanothermobacter thermautotrophicus (strain ATCC 29096 / DSM 1053 / JCM 10044 / NBRC 100330 / Delta H) (Methanobacterium thermoautotrophicum)).